We begin with the raw amino-acid sequence, 605 residues long: Zinc metalloproteinase nas-34 (605 aa).

The N-terminal stretch at 1 to 19 is a signal peptide; it reads MVSYWPVLIVLCLLPICHA. Positions 20-124 are excised as a propeptide; the sequence is KSYFADFVNG…EFLYAIRGKR (105 aa). The region spanning 124–322 is the Peptidase M12A domain; it reads RSMTSFLSER…VKRINFAYCN (199 aa). 2 disulfide bridges follow: Cys165/Cys321 and Cys191/Cys211. Zn(2+) is bound at residue His219. The active site involves Glu220. His223 and His229 together coordinate Zn(2+). Residues 317–357 form the EGF-like domain; it reads NFAYCNSTCSNYLDCQNGGYINPNDCNNCKCPPGFGGQLCD. Asn322 is a glycosylation site (N-linked (GlcNAc...) asparagine). Intrachain disulfides connect Cys325–Cys345, Cys347–Cys356, Cys366–Cys388, and Cys415–Cys436. In terms of domain architecture, CUB spans 366–469; it reads CGAGDITATS…ARFSLNYRYD (104 aa). The disordered stretch occupies residues 479–526; it reads TTTSTTTTTAPITVPTVSPTTTTTRQTTTTARTSTTTTTTQAPPTTTT. The 42-residue stretch at 525–566 folds into the TSP type-1 domain; the sequence is TTSTSQCASWSACSAQCGGCGTQSRRCGTYVETVYCNTNPCT. 3 disulfides stabilise this stretch: Cys531–Cys551, Cys537–Cys560, and Cys541–Cys565.

It depends on Zn(2+) as a cofactor. Expressed in hypodermal cells. First expressed in the dorsal and lateral surface area of the middle and posterior region of embryos. At later stages, it localizes to lateral surface regions, probably corresponding to hypodermal seam cells. In L1 larvae, it is expressed in seam cells and in a few cells anterior to the nerve ring.

Its subcellular location is the secreted. Metalloprotease. Required for normal hatching and migration of neuroblasts. May act by degrading eggshell proteins at hatching. This is Zinc metalloproteinase nas-34 (hch-1) from Caenorhabditis elegans.